Consider the following 252-residue polypeptide: TGEKPFTCNECGKFFSCTSWLNVHLRSHTGEKPFTCSECGKFFSCMSRLKVHFRGHTGEKPSACTECEKCFSSISQRNIHIRSHTGDKSYTCTVCGKIFTRISQFNVHVRSHTGEKPFKCTECGKSFICNSQLNLHLRFHTGEKLTTCSECGKCFTHTSHLNVHFRVHTGEKPFTCTECGKCLTRQYQLTEHSYLHKGEKPYTCTECGKCFTRRYHLTEHSYLHTGEKPFTCTECGKGFTRRSHLKAHSHTH.

9 C2H2-type zinc fingers span residues 6 to 28 (FTCNECGKFFSCTSWLNVHLRSH), 34 to 56 (FTCSECGKFFSCMSRLKVHFRGH), 62 to 84 (SACTECEKCFSSISQRNIHIRSH), 90 to 112 (YTCTVCGKIFTRISQFNVHVRSH), 118 to 140 (FKCTECGKSFICNSQLNLHLRFH), 146 to 168 (TTCSECGKCFTHTSHLNVHFRVH), 174 to 196 (FTCTECGKCLTRQYQLTEHSYLH), 202 to 224 (YTCTECGKCFTRRYHLTEHSYLH), and 230 to 252 (FTCTECGKGFTRRSHLKAHSHTH).

The protein belongs to the krueppel C2H2-type zinc-finger protein family.

It is found in the nucleus. Functionally, may be involved in transcriptional regulation. The polypeptide is Gastrula zinc finger protein XlCGF28.1 (Xenopus laevis (African clawed frog)).